A 410-amino-acid chain; its full sequence is Multidrug resistance protein MdtA (410 aa).

A signal peptide spans 1–21 (MNNRYPVMKKGLIVLVVIAVA). A disordered region spans residues 36–56 (SDGDLSGQSAHGKRGNGAHKP).

The protein belongs to the membrane fusion protein (MFP) (TC 8.A.1) family. As to quaternary structure, part of a tripartite efflux system composed of MdtA, MdtB and MdtC.

It is found in the cell inner membrane. The polypeptide is Multidrug resistance protein MdtA (Pantoea ananatis (strain AJ13355)).